We begin with the raw amino-acid sequence, 315 residues long: Acetyl-coenzyme A carboxylase carboxyl transferase subunit alpha (315 aa).

One can recognise a CoA carboxyltransferase C-terminal domain in the interval 40 to 293 (LEDKKIALTK…KKNVLAALDR (254 aa)).

Belongs to the AccA family. In terms of assembly, acetyl-CoA carboxylase is a heterohexamer composed of biotin carboxyl carrier protein (AccB), biotin carboxylase (AccC) and two subunits each of ACCase subunit alpha (AccA) and ACCase subunit beta (AccD).

It localises to the cytoplasm. It catalyses the reaction N(6)-carboxybiotinyl-L-lysyl-[protein] + acetyl-CoA = N(6)-biotinyl-L-lysyl-[protein] + malonyl-CoA. Its pathway is lipid metabolism; malonyl-CoA biosynthesis; malonyl-CoA from acetyl-CoA: step 1/1. In terms of biological role, component of the acetyl coenzyme A carboxylase (ACC) complex. First, biotin carboxylase catalyzes the carboxylation of biotin on its carrier protein (BCCP) and then the CO(2) group is transferred by the carboxyltransferase to acetyl-CoA to form malonyl-CoA. This chain is Acetyl-coenzyme A carboxylase carboxyl transferase subunit alpha, found in Marinomonas sp. (strain MWYL1).